The chain runs to 371 residues: Cytochrome b (371 aa).

4 helical membrane passes run 25-45 (FGSM…FLAV), 69-90 (WMMQ…YTHI), 105-125 (WLSG…GYVL), and 170-190 (FFAL…LHIM). 2 residues coordinate heme b: His75 and His89. Heme b-binding residues include His174 and His188. His193 serves as a coordination point for a ubiquinone. 4 helical membrane-spanning segments follow: residues 218–238 (YKDM…VAFF), 280–300 (LGGA…PFTH), 312–332 (IMQL…WAAT), and 339–358 (FTTI…ITNP).

The protein belongs to the cytochrome b family. The cytochrome bc1 complex contains 3 respiratory subunits (MT-CYB, CYC1 and UQCRFS1), 2 core proteins (UQCRC1 and UQCRC2) and probably 6 low-molecular weight proteins. The cofactor is heme b.

Its subcellular location is the mitochondrion inner membrane. Functionally, component of the ubiquinol-cytochrome c reductase complex (complex III or cytochrome b-c1 complex) that is part of the mitochondrial respiratory chain. The b-c1 complex mediates electron transfer from ubiquinol to cytochrome c. Contributes to the generation of a proton gradient across the mitochondrial membrane that is then used for ATP synthesis. The polypeptide is Cytochrome b (MT-CYB) (Eryx colubrinus colubrinus).